A 106-amino-acid polypeptide reads, in one-letter code: ATPase inhibitor, mitochondrial (106 aa).

The transit peptide at 1-25 (MAGSALAVRARFGVWGMKVLQTRGF) directs the protein to the mitochondrion. An N-terminal inhibitory region region spans residues 26–52 (VSDSSDSMDTGAGSIREAGGAFGKREK). Positions 26–58 (VSDSSDSMDTGAGSIREAGGAFGKREKAEEDRY) are disordered. Residue Ser-39 is modified to Phosphoserine. A compositionally biased stretch (basic and acidic residues) spans 48 to 58 (GKREKAEEDRY). Residues 60–106 (REKTKEQLAALRKHHEDEIDHHSKEIERLQKQIERHKKKIQQLKNNH) are a coiled coil. Residues 74 to 106 (HEDEIDHHSKEIERLQKQIERHKKKIQQLKNNH) form an antiparallel alpha-helical coiled coil region region. An N6-succinyllysine modification is found at Lys-103.

This sequence belongs to the ATPase inhibitor family. In terms of assembly, homodimer; represents the active form and is present at a pH value below 6.5. Homotetramer; represents the inactive form and is present at a pH value above 7.0.

It localises to the mitochondrion. Its function is as follows. Endogenous F(1)F(o)-ATPase inhibitor limiting ATP depletion when the mitochondrial membrane potential falls below a threshold and the F(1)F(o)-ATP synthase starts hydrolyzing ATP to pump protons out of the mitochondrial matrix. Required to avoid the consumption of cellular ATP when the F(1)F(o)-ATP synthase enzyme acts as an ATP hydrolase. Indirectly acts as a regulator of heme synthesis in erythroid tissues: regulates heme synthesis by modulating the mitochondrial pH and redox potential, allowing FECH to efficiently catalyze the incorporation of iron into protoporphyrin IX to produce heme. The chain is ATPase inhibitor, mitochondrial from Mus musculus (Mouse).